We begin with the raw amino-acid sequence, 155 residues long: UBA-like domain-containing protein 1 (155 aa).

Positions 81–155 are disordered; that stretch reads KASESFNSSS…KASAAMEAER (75 aa). Residues 83-96 show a composition bias toward low complexity; it reads SESFNSSSSPSMAT. Positions 112 to 127 are enriched in polar residues; it reads ANQQSLWTQGPSAQQT. The span at 139–155 shows a compositional bias: low complexity; it reads QQAASEQKASAAMEAER.

It belongs to the UBALD family.

The protein is UBA-like domain-containing protein 1 (ubald1) of Danio rerio (Zebrafish).